The chain runs to 318 residues: ADP-L-glycero-D-manno-heptose-6-epimerase (318 aa).

NADP(+) is bound by residues 10-11 (FI), 31-32 (DD), lysine 38, lysine 53, 80-84 (EGACS), and asparagine 97. The active-site Proton acceptor is tyrosine 144. Position 148 (lysine 148) interacts with NADP(+). Asparagine 173 serves as a coordination point for substrate. Positions 174 and 182 each coordinate NADP(+). The Proton acceptor role is filled by lysine 182. Residues lysine 184, histidine 191, 205-208 (FGAW), arginine 218, and tyrosine 282 contribute to the substrate site.

Belongs to the NAD(P)-dependent epimerase/dehydratase family. HldD subfamily. As to quaternary structure, homopentamer. It depends on NADP(+) as a cofactor.

The catalysed reaction is ADP-D-glycero-beta-D-manno-heptose = ADP-L-glycero-beta-D-manno-heptose. It participates in nucleotide-sugar biosynthesis; ADP-L-glycero-beta-D-manno-heptose biosynthesis; ADP-L-glycero-beta-D-manno-heptose from D-glycero-beta-D-manno-heptose 7-phosphate: step 4/4. Functionally, catalyzes the interconversion between ADP-D-glycero-beta-D-manno-heptose and ADP-L-glycero-beta-D-manno-heptose via an epimerization at carbon 6 of the heptose. This Chromohalobacter salexigens (strain ATCC BAA-138 / DSM 3043 / CIP 106854 / NCIMB 13768 / 1H11) protein is ADP-L-glycero-D-manno-heptose-6-epimerase.